The sequence spans 278 residues: Large ribosomal subunit protein uL2 (278 aa).

The tract at residues 201 to 278 is disordered; sequence HGNINDGKAG…IMRSRHQRKK (78 aa). Basic residues predominate over residues 210 to 221; that stretch reads GRSRWRGKRPHV.

The protein belongs to the universal ribosomal protein uL2 family. Part of the 50S ribosomal subunit. Forms a bridge to the 30S subunit in the 70S ribosome.

In terms of biological role, one of the primary rRNA binding proteins. Required for association of the 30S and 50S subunits to form the 70S ribosome, for tRNA binding and peptide bond formation. It has been suggested to have peptidyltransferase activity; this is somewhat controversial. Makes several contacts with the 16S rRNA in the 70S ribosome. This chain is Large ribosomal subunit protein uL2, found in Rhizobium meliloti (strain 1021) (Ensifer meliloti).